A 482-amino-acid polypeptide reads, in one-letter code: PHD finger protein At3g20280 (482 aa).

Residues 45 to 97 (AMACQICEVTINEMDTLLICDACEKAYHLKCLQGNNMKGVPKSEWHCSRCVQA) form a PHD-type zinc finger. Disordered stretches follow at residues 188-210 (TNIG…APVS) and 314-482 (SSNS…ENAA). Positions 314–324 (SSNSQQAVSHS) are enriched in low complexity. Polar residues-rich tracts occupy residues 377–386 (ACQNHPTASP) and 393–428 (QDST…NYDS). The span at 447 to 482 (DSEKGKGLNGLDDRHQEQPSEPEFYKSDSVKEENAA) shows a compositional bias: basic and acidic residues.

The polypeptide is PHD finger protein At3g20280 (Arabidopsis thaliana (Mouse-ear cress)).